The chain runs to 247 residues: Carboxy-S-adenosyl-L-methionine synthase (247 aa).

Residues Y40, 65 to 67 (GAS), 90 to 91 (DN), 122 to 123 (DI), N137, and R204 each bind S-adenosyl-L-methionine.

It belongs to the class I-like SAM-binding methyltransferase superfamily. Cx-SAM synthase family. Homodimer.

The enzyme catalyses prephenate + S-adenosyl-L-methionine = carboxy-S-adenosyl-L-methionine + 3-phenylpyruvate + H2O. Its function is as follows. Catalyzes the conversion of S-adenosyl-L-methionine (SAM) to carboxy-S-adenosyl-L-methionine (Cx-SAM). The protein is Carboxy-S-adenosyl-L-methionine synthase of Ectopseudomonas mendocina (strain ymp) (Pseudomonas mendocina).